The primary structure comprises 184 residues: Envelope protein 169 (184 aa).

At 1–6 (MKKYIK) the chain is on the intravirion side. A helical transmembrane segment spans residues 7 to 27 (MYLVLLIAIILFITILVIFLI). Residues 28 to 184 (SGLFYPEQNP…TVMAIPRKVL (157 aa)) lie on the Virion surface side of the membrane.

It belongs to the asfivirus envelope protein p22 family.

Its subcellular location is the virion membrane. It localises to the host cell membrane. The sequence is that of Envelope protein 169 from Ornithodoros (relapsing fever ticks).